The chain runs to 466 residues: Uronate isomerase (466 aa).

The protein belongs to the metallo-dependent hydrolases superfamily. Uronate isomerase family.

It catalyses the reaction D-glucuronate = D-fructuronate. It carries out the reaction aldehydo-D-galacturonate = keto-D-tagaturonate. The protein operates within carbohydrate metabolism; pentose and glucuronate interconversion. In Lachnoclostridium phytofermentans (strain ATCC 700394 / DSM 18823 / ISDg) (Clostridium phytofermentans), this protein is Uronate isomerase.